The primary structure comprises 521 residues: (+)-kolavenyl diphosphate synthase (521 aa).

Positions 311 and 313 each coordinate Mg(2+). The DXDD motif motif lies at 311–314; it reads DGDD.

Belongs to the terpene synthase family. Requires Mg(2+) as cofactor.

It carries out the reaction (2E,6E,10E)-geranylgeranyl diphosphate = (+)-kolavenyl diphosphate. Functionally, involved in the biosynthesis of (+)-O-methylkolavelool. Catalyzes the conversion of geranylgeranyl diphosphate into (+)-kolavenyl diphosphate. The chain is (+)-kolavenyl diphosphate synthase from Herpetosiphon aurantiacus (strain ATCC 23779 / DSM 785 / 114-95).